A 571-amino-acid chain; its full sequence is Potassium-transporting ATPase potassium-binding subunit (571 aa).

10 helical membrane-spanning segments follow: residues 7–27, 66–86, 137–157, 188–208, 255–275, 286–306, 390–410, 430–450, 497–517, and 538–558; these read LQFAALIAVLLLTAPALGGYL, TYALSVLAFSVMSFLLLYGIA, GLAVQNFVSASAGMCVLAALI, FVVAILLVSQGVIQNLHGFIV, IGNFVENWAILIIPFALCFAF, WAVLAIMGIIWIGMSVAAMSF, VGLNGLLVMAILAVFIAGLMV, TLYILAMPIALLSFAAASVLI, IGVAMLIGRFFLIIPVLAIAG, and LFVGLVIGVVLIVGGLTFFPA.

The protein belongs to the KdpA family. As to quaternary structure, the system is composed of three essential subunits: KdpA, KdpB and KdpC.

Its subcellular location is the cell membrane. In terms of biological role, part of the high-affinity ATP-driven potassium transport (or Kdp) system, which catalyzes the hydrolysis of ATP coupled with the electrogenic transport of potassium into the cytoplasm. This subunit binds the extracellular potassium ions and delivers the ions to the membrane domain of KdpB through an intramembrane tunnel. The polypeptide is Potassium-transporting ATPase potassium-binding subunit (Mycobacterium bovis (strain ATCC BAA-935 / AF2122/97)).